A 103-amino-acid chain; its full sequence is Cell division suppressor protein YneA (103 aa).

The LysM domain occupies 36-87 (VKIEVQSGDTLWGLADQVNDSKSIDKNAFIDWVTQHNDLASTEIQPGDILVI).

The protein belongs to the YneA family.

It localises to the cytoplasm. Inhibits cell division during the SOS response. Affects a later stage of the cell division protein assembly, after the assembly of the Z ring, by probably suppressing recruitment of FtsL and/or DivIC to the division machinery. The polypeptide is Cell division suppressor protein YneA (Bacillus pumilus (strain SAFR-032)).